A 157-amino-acid chain; its full sequence is Lipoprotein signal peptidase (157 aa).

A run of 3 helical transmembrane segments spans residues 10–30 (LIFI…KYAI), 58–78 (FLEG…FIFL), and 84–104 (LFKN…SNVL). Catalysis depends on residues aspartate 114 and aspartate 131. The chain crosses the membrane as a helical span at residues 122–142 (FDFAIFNFADVMIDVGVGVLL).

It belongs to the peptidase A8 family.

Its subcellular location is the cell inner membrane. It catalyses the reaction Release of signal peptides from bacterial membrane prolipoproteins. Hydrolyzes -Xaa-Yaa-Zaa-|-(S,diacylglyceryl)Cys-, in which Xaa is hydrophobic (preferably Leu), and Yaa (Ala or Ser) and Zaa (Gly or Ala) have small, neutral side chains.. The protein operates within protein modification; lipoprotein biosynthesis (signal peptide cleavage). Its function is as follows. This protein specifically catalyzes the removal of signal peptides from prolipoproteins. This chain is Lipoprotein signal peptidase, found in Helicobacter pylori (strain Shi470).